We begin with the raw amino-acid sequence, 358 residues long: Microbial Terpene synthase-like protein 13 (358 aa).

Belongs to the terpene synthase family.

Its function is as follows. No terpene synthase activity detected in vitro. The sequence is that of Microbial Terpene synthase-like protein 13 from Selaginella moellendorffii (Spikemoss).